Here is a 236-residue protein sequence, read N- to C-terminus: Sugar fermentation stimulation protein homolog (236 aa).

Belongs to the SfsA family.

In Pseudomonas fluorescens (strain SBW25), this protein is Sugar fermentation stimulation protein homolog.